The primary structure comprises 735 residues: MPLAQLKEPWPLMELVPLDPENGQASGEEAGLQPSKDEGILKEISITHHVKAGSEKADPSHFELLKVLGQGSFGKVFLVRKVTRPDNGHLYAMKVLKKATLKVRDRVRTKMERDILADVNHPFVVKLHYAFQTEGKLYLILDFLRGGDLFTRLSKEVMFTEEDVKFYLAELALGLDHLHSLGIIYRDLKPENILLDEEGHIKLTDFGLSKEAIDHEKKAYSFCGTVEYMAPEVVNRQGHTHSADWWSYGVLMFEMLTGSLPFQGKDRKETMTLILKAKLGMPQFLSTEAQSLLRALFKRNPANRLGSGPDGAEEIKRHIFYSTIDWNKLYRREIKPPFKPAVAQPDDTFYFDTEFTSRTPRDSPGIPPSAGAHQLFRGFSFVATGLMEDDSKPRATQAPLHSVVQQLHGKNLVFSDGYIVKETIGVGSYSVCKRCVHKATNMEYAVKVIDKSKRDPSEEIEILLRYGQHPNIITLKDVYDDSKHVYLVTELMRGGELLDKILRQKFFSEREASFVLYTISKTVEYLHSQGVVHRDLKPSNILYVDESGNPECLRICDFGFAKQLRAENGLLMTPCYTANFVAPEVLKRQGYDEGCDIWSLGVLLYTMLAGYTPFANGPSDTPEEILTRISSGKFTLSGGNWNTVSETAKDLVSKMLHVDPHQRLTAKQVLQHPWITQKDKLPQSQLSHQDLQLVKGGMAATYSALSSSKPTPQLKPIESSILAQRRVRKLPSTTL.

Serine 54 bears the Phosphoserine mark. The 260-residue stretch at 62–321 (FELLKVLGQG…AEEIKRHIFY (260 aa)) folds into the Protein kinase 1 domain. ATP is bound by residues 68-76 (LGQGSFGKV) and lysine 94. The Proton acceptor role is filled by aspartate 187. Serine 221 bears the Phosphoserine; by PDPK1 mark. Phosphoserine is present on serine 307. The AGC-kinase C-terminal domain occupies 322–391 (STIDWNKLYR…VATGLMEDDS (70 aa)). Threonine 359 is modified (phosphothreonine). A Phosphoserine modification is found at serine 363. Phosphoserine; by autocatalysis is present on residues serine 369 and serine 380. Residues 418 to 675 (YIVKETIGVG…AKQVLQHPWI (258 aa)) enclose the Protein kinase 2 domain. Residues 424 to 432 (IGVGSYSVC) and lysine 447 contribute to the ATP site. Aspartate 535 (proton acceptor) is an active-site residue. Threonine 573 is modified (phosphothreonine). A Phosphoserine modification is found at serine 732.

The protein belongs to the protein kinase superfamily. AGC Ser/Thr protein kinase family. S6 kinase subfamily. In terms of assembly, forms a complex with either MAPK1/ERK2 or MAPK3/ERK1 in quiescent cells. Transiently dissociates following mitogenic stimulation. Interacts with ETV1/ER81 and FGFR1. Requires Mg(2+) as cofactor. Activated by phosphorylation at Ser-221 by PDPK1. Autophosphorylated on Ser-380, as part of the activation process. May be phosphorylated at Thr-359 and Ser-363 by MAPK1/ERK2 and MAPK3/ERK1. In terms of processing, N-terminal myristoylation results in an activated kinase in the absence of added growth factors.

It localises to the nucleus. Its subcellular location is the cytoplasm. It carries out the reaction L-seryl-[protein] + ATP = O-phospho-L-seryl-[protein] + ADP + H(+). The enzyme catalyses L-threonyl-[protein] + ATP = O-phospho-L-threonyl-[protein] + ADP + H(+). Upon extracellular signal or mitogen stimulation, phosphorylated at Thr-573 in the C-terminal kinase domain (CTKD) by MAPK1/ERK2 and MAPK3/ERK1. The activated CTKD then autophosphorylates Ser-380, allowing binding of PDPK1, which in turn phosphorylates Ser-221 in the N-terminal kinase domain (NTDK) leading to the full activation of the protein and subsequent phosphorylation of the substrates by the NTKD. Functionally, serine/threonine-protein kinase that acts downstream of ERK (MAPK1/ERK2 and MAPK3/ERK1) signaling and mediates mitogenic and stress-induced activation of the transcription factors CREB1, ETV1/ER81 and NR4A1/NUR77, regulates translation through RPS6 and EIF4B phosphorylation, and mediates cellular proliferation, survival, and differentiation by modulating mTOR signaling and repressing pro-apoptotic function of BAD and DAPK1. In fibroblast, is required for EGF-stimulated phosphorylation of CREB1, which results in the subsequent transcriptional activation of several immediate-early genes. In response to mitogenic stimulation (EGF and PMA), phosphorylates and activates NR4A1/NUR77 and ETV1/ER81 transcription factors and the cofactor CREBBP. Upon insulin-derived signal, acts indirectly on the transcription regulation of several genes by phosphorylating GSK3B at 'Ser-9' and inhibiting its activity. Phosphorylates RPS6 in response to serum or EGF via an mTOR-independent mechanism and promotes translation initiation by facilitating assembly of the pre-initiation complex. In response to insulin, phosphorylates EIF4B, enhancing EIF4B affinity for the EIF3 complex and stimulating cap-dependent translation. Is involved in the mTOR nutrient-sensing pathway by directly phosphorylating TSC2 at 'Ser-1798', which potently inhibits TSC2 ability to suppress mTOR signaling, and mediates phosphorylation of RPTOR, which regulates mTORC1 activity and may promote rapamycin-sensitive signaling independently of the PI3K/AKT pathway. Also involved in feedback regulation of mTORC1 and mTORC2 by phosphorylating DEPTOR. Mediates cell survival by phosphorylating the pro-apoptotic proteins BAD and DAPK1 and suppressing their pro-apoptotic function. Promotes the survival of hepatic stellate cells by phosphorylating CEBPB in response to the hepatotoxin carbon tetrachloride (CCl4). Mediates induction of hepatocyte prolifration by TGFA through phosphorylation of CEBPB. Is involved in cell cycle regulation by phosphorylating the CDK inhibitor CDKN1B, which promotes CDKN1B association with 14-3-3 proteins and prevents its translocation to the nucleus and inhibition of G1 progression. Phosphorylates EPHA2 at 'Ser-897', the RPS6KA-EPHA2 signaling pathway controls cell migration. In response to mTORC1 activation, phosphorylates EIF4B at 'Ser-406' and 'Ser-422' which stimulates bicarbonate cotransporter SLC4A7 mRNA translation, increasing SLC4A7 protein abundance and function. This is Ribosomal protein S6 kinase alpha-1 (Rps6ka1) from Rattus norvegicus (Rat).